The primary structure comprises 588 residues: Aspartate--tRNA ligase (588 aa).

Glu-177 is an L-aspartate binding site. Residues 201–204 (QLFK) form an aspartate region. L-aspartate is bound at residue Arg-223. ATP-binding positions include 223–225 (RDE) and Gln-232. Residue His-451 coordinates L-aspartate. ATP is bound at residue Glu-485. Arg-492 is a binding site for L-aspartate. Position 537–540 (537–540 (GLDR)) interacts with ATP.

Belongs to the class-II aminoacyl-tRNA synthetase family. Type 1 subfamily. In terms of assembly, homodimer.

It localises to the cytoplasm. The enzyme catalyses tRNA(Asp) + L-aspartate + ATP = L-aspartyl-tRNA(Asp) + AMP + diphosphate. In terms of biological role, catalyzes the attachment of L-aspartate to tRNA(Asp) in a two-step reaction: L-aspartate is first activated by ATP to form Asp-AMP and then transferred to the acceptor end of tRNA(Asp). The polypeptide is Aspartate--tRNA ligase (Staphylococcus haemolyticus (strain JCSC1435)).